Consider the following 814-residue polypeptide: DNA topoisomerase 1 (814 aa).

Over residues 1–12 (MSSSDSDSVSLS) the composition is skewed to low complexity. Residues 1–180 (MSSSDSDSVS…PNDEEDEDED (180 aa)) are disordered. Basic residues predominate over residues 13-22 (IRRRQRRGSS). Phosphoserine occurs at positions 52, 54, and 136. Thr138 carries the post-translational modification Phosphothreonine. Interaction with DNA regions lie at residues 404-405 (KY), 467-472 (RAGNEK), and 559-561 (SAK). The Topo IB-type catalytic domain maps to 411 to 814 (GSSLKGQSDL…AADTPPDWKW (404 aa)). Residue Tyr773 is the O-(3'-phospho-DNA)-tyrosine intermediate of the active site.

This sequence belongs to the type IB topoisomerase family. In terms of assembly, monomer.

The catalysed reaction is ATP-independent breakage of single-stranded DNA, followed by passage and rejoining.. Functionally, releases the supercoiling and torsional tension of DNA introduced during the DNA replication and transcription by transiently cleaving and rejoining one strand of the DNA duplex. Introduces a single-strand break via transesterification at a target site in duplex DNA. The scissile phosphodiester is attacked by the catalytic tyrosine of the enzyme, resulting in the formation of a DNA-(3'-phosphotyrosyl)-enzyme intermediate and the expulsion of a 5'-OH DNA strand. TThe free DNA strand then rotates around the intact phosphodiester bond on the opposing strand, thus removing DNA supercoils. Finally, in the religation step, the DNA 5'-OH attacks the covalent intermediate to expel the active-site tyrosine and restore the DNA phosphodiester backbone. This Schizosaccharomyces pombe (strain 972 / ATCC 24843) (Fission yeast) protein is DNA topoisomerase 1 (top1).